Reading from the N-terminus, the 365-residue chain is Leu/Ile/Val/Thr-binding protein (365 aa).

The first 21 residues, 1 to 21 (MKGKTLLAGCIALSLSHMAFA), serve as a signal peptide directing secretion. Cysteine 74 and cysteine 99 are disulfide-bonded.

This sequence belongs to the leucine-binding protein family.

The protein resides in the periplasm. Functionally, this protein is a component of the leucine, isoleucine, valine, threonine transport system, which is one of the two periplasmic binding protein-dependent transport systems of the high-affinity transport of the branched-chain amino acids. This chain is Leu/Ile/Val/Thr-binding protein (livJ), found in Salmonella typhimurium (strain LT2 / SGSC1412 / ATCC 700720).